The chain runs to 344 residues: MDDNKAKALAAALSQIEKQFGKGSIMRMGDGNVEKDIQTVSTGSLGLDIALGLGGLPRGRVVEIYGPESSGKTTLTLQVVAEMQKLGGTAAFIDAEHALDVGYAEKLGVNITDLLISQPDTGEQALEIADMLVRSGGVDVVVIDSVAALTPKAEIEGEMGDQLPGLQARLMSQALRKLTANIKRTNTLVIFINQIRMKIGVMFGNPETTTGGNALKFYASVRMDIRRTGTIKRGDEVVGSETKVKVVKNKVSPPFKEAHFDILYGEGVSREGEIIDLGVDHKIVDKSGAWYAYNGDKIGQGKDNAREFLRANPALAREIENKVRVVLGLKELPVDGAQPAAAEA.

Gly-66–Thr-73 is an ATP binding site.

This sequence belongs to the RecA family.

Its subcellular location is the cytoplasm. Functionally, can catalyze the hydrolysis of ATP in the presence of single-stranded DNA, the ATP-dependent uptake of single-stranded DNA by duplex DNA, and the ATP-dependent hybridization of homologous single-stranded DNAs. It interacts with LexA causing its activation and leading to its autocatalytic cleavage. The polypeptide is Protein RecA (Azoarcus sp. (strain BH72)).